We begin with the raw amino-acid sequence, 455 residues long: Homogentisate 1,2-dioxygenase (455 aa).

His-308 (proton acceptor) is an active-site residue. Residues His-351 and Glu-357 each contribute to the Fe cation site. Homogentisate-binding residues include Tyr-366 and His-387. His-387 is a binding site for Fe cation.

It belongs to the homogentisate dioxygenase family. In terms of assembly, hexamer; dimer of trimers. It depends on Fe cation as a cofactor.

The enzyme catalyses homogentisate + O2 = 4-maleylacetoacetate + H(+). Its pathway is amino-acid degradation; L-phenylalanine degradation; acetoacetate and fumarate from L-phenylalanine: step 4/6. Functionally, involved in the catabolism of homogentisate (2,5-dihydroxyphenylacetate or 2,5-OH-PhAc), a central intermediate in the degradation of phenylalanine and tyrosine. Catalyzes the oxidative ring cleavage of the aromatic ring of homogentisate to yield maleylacetoacetate. This chain is Homogentisate 1,2-dioxygenase, found in Xanthomonas campestris pv. campestris (strain 8004).